Here is a 496-residue protein sequence, read N- to C-terminus: MKIVMENIHKSFGSNNVLEGVDFSLEPGEIHALMGENGAGKSTLMNILTGLFPSNQGSITIDGVKTQYKDSKESEQAGIAFIRQELNILPQMTVLENLFIGKEMTNSFGFLREKVMKEKAEEVFSRLDFSIPFDKEAGECSVGEQQLIEIAKALMLDAKIIIMDEPTAALTDREIDKLFEIMKELTQQGVALVYISHRMEEIFAICDRITVMRDGISVKTSWIKDTNYNEIVKQMVGRELDERYPERTPTFGKPVLQVNNFSRKGYFNDIKFSVREGEILGVSGLMGAGRTEIMRAIFGIDEVDQGEILLDGKKLTIKDPTDAMKAGLAFITENRKDEGLVLDFSIRENIGLSNLNSFSNKGFIKGKDEKDFVELMIKRLQIKTQTQELPVGNLSGGNQQKVVIAKWVGTSPRVLIMDEPTRGIDVGAKREIYQLMNELTERGLAIIMISSDLPEVLGMSDRIMVIHEGEISGELVREEATQEKIMTYATGGNGHE.

ABC transporter domains lie at I3 to E239 and E246 to N493. Residue G35–S42 coordinates ATP.

This sequence belongs to the ABC transporter superfamily. Ribose importer (TC 3.A.1.2.1) family. As to quaternary structure, the complex is composed of an ATP-binding protein (RbsA), two transmembrane proteins (RbsC) and a solute-binding protein (RbsB).

It localises to the cell membrane. The catalysed reaction is D-ribose(out) + ATP + H2O = D-ribose(in) + ADP + phosphate + H(+). In terms of biological role, part of the ABC transporter complex RbsABC involved in ribose import. Responsible for energy coupling to the transport system. The chain is Ribose import ATP-binding protein RbsA from Oceanobacillus iheyensis (strain DSM 14371 / CIP 107618 / JCM 11309 / KCTC 3954 / HTE831).